Here is a 338-residue protein sequence, read N- to C-terminus: Glycerol-3-phosphate dehydrogenase [NAD(P)+] (338 aa).

NADPH is bound by residues W11, R30, and K107. 3 residues coordinate sn-glycerol 3-phosphate: K107, G140, and S142. Position 144 (A144) interacts with NADPH. Positions 195, 248, 258, 259, and 260 each coordinate sn-glycerol 3-phosphate. The active-site Proton acceptor is the K195. R259 contributes to the NADPH binding site. 2 residues coordinate NADPH: V283 and E285.

Belongs to the NAD-dependent glycerol-3-phosphate dehydrogenase family.

The protein localises to the cytoplasm. It carries out the reaction sn-glycerol 3-phosphate + NAD(+) = dihydroxyacetone phosphate + NADH + H(+). The enzyme catalyses sn-glycerol 3-phosphate + NADP(+) = dihydroxyacetone phosphate + NADPH + H(+). It participates in membrane lipid metabolism; glycerophospholipid metabolism. Functionally, catalyzes the reduction of the glycolytic intermediate dihydroxyacetone phosphate (DHAP) to sn-glycerol 3-phosphate (G3P), the key precursor for phospholipid synthesis. In Ralstonia nicotianae (strain ATCC BAA-1114 / GMI1000) (Ralstonia solanacearum), this protein is Glycerol-3-phosphate dehydrogenase [NAD(P)+].